The following is an 82-amino-acid chain: Phosphoribosylformylglycinamidine synthase subunit PurS (82 aa).

This sequence belongs to the PurS family. Homodimer. Part of the FGAM synthase complex composed of 1 PurL, 1 PurQ and 2 PurS subunits.

The protein resides in the cytoplasm. It catalyses the reaction N(2)-formyl-N(1)-(5-phospho-beta-D-ribosyl)glycinamide + L-glutamine + ATP + H2O = 2-formamido-N(1)-(5-O-phospho-beta-D-ribosyl)acetamidine + L-glutamate + ADP + phosphate + H(+). It participates in purine metabolism; IMP biosynthesis via de novo pathway; 5-amino-1-(5-phospho-D-ribosyl)imidazole from N(2)-formyl-N(1)-(5-phospho-D-ribosyl)glycinamide: step 1/2. Part of the phosphoribosylformylglycinamidine synthase complex involved in the purines biosynthetic pathway. Catalyzes the ATP-dependent conversion of formylglycinamide ribonucleotide (FGAR) and glutamine to yield formylglycinamidine ribonucleotide (FGAM) and glutamate. The FGAM synthase complex is composed of three subunits. PurQ produces an ammonia molecule by converting glutamine to glutamate. PurL transfers the ammonia molecule to FGAR to form FGAM in an ATP-dependent manner. PurS interacts with PurQ and PurL and is thought to assist in the transfer of the ammonia molecule from PurQ to PurL. In Thermotoga maritima (strain ATCC 43589 / DSM 3109 / JCM 10099 / NBRC 100826 / MSB8), this protein is Phosphoribosylformylglycinamidine synthase subunit PurS.